Consider the following 672-residue polypeptide: Peptidoglycan D,D-transpeptidase MrdA (672 aa).

The helical transmembrane segment at 21-41 (IFFAVGLVIICLLVLASRYAY) threads the bilayer. Residue S326 is the Acyl-ester intermediate of the active site. Zn(2+) contacts are provided by D350, D365, H371, and C384. The interval 616 to 672 (ANHQVNGGLMTAGIKPGELPSGNESASSTPATSAPTSAAASTPQATPTRPATNEVDE) is disordered. The span at 640–672 (SASSTPATSAPTSAAASTPQATPTRPATNEVDE) shows a compositional bias: low complexity.

Belongs to the transpeptidase family. MrdA subfamily. Monomer. Requires Zn(2+) as cofactor.

The protein resides in the cell inner membrane. It catalyses the reaction Preferential cleavage: (Ac)2-L-Lys-D-Ala-|-D-Ala. Also transpeptidation of peptidyl-alanyl moieties that are N-acyl substituents of D-alanine.. Its pathway is cell wall biogenesis; peptidoglycan biosynthesis. Its activity is regulated as follows. Inhibited by the beta-lactams sulbactam and piperacillin-tazobactam. Functionally, catalyzes cross-linking of the peptidoglycan cell wall. Involved in the determination of the rod shape of the cell. The protein is Peptidoglycan D,D-transpeptidase MrdA of Acinetobacter baumannii (strain ATCC 19606 / DSM 30007 / JCM 6841 / CCUG 19606 / CIP 70.34 / NBRC 109757 / NCIMB 12457 / NCTC 12156 / 81).